The chain runs to 186 residues: ATP synthase subunit b (186 aa).

The chain crosses the membrane as a helical span at residues 28–48 (IVWSIIPFAVILFVFWKFVLP).

This sequence belongs to the ATPase B chain family. F-type ATPases have 2 components, F(1) - the catalytic core - and F(0) - the membrane proton channel. F(1) has five subunits: alpha(3), beta(3), gamma(1), delta(1), epsilon(1). F(0) has three main subunits: a(1), b(2) and c(10-14). The alpha and beta chains form an alternating ring which encloses part of the gamma chain. F(1) is attached to F(0) by a central stalk formed by the gamma and epsilon chains, while a peripheral stalk is formed by the delta and b chains.

Its subcellular location is the cell membrane. F(1)F(0) ATP synthase produces ATP from ADP in the presence of a proton or sodium gradient. F-type ATPases consist of two structural domains, F(1) containing the extramembraneous catalytic core and F(0) containing the membrane proton channel, linked together by a central stalk and a peripheral stalk. During catalysis, ATP synthesis in the catalytic domain of F(1) is coupled via a rotary mechanism of the central stalk subunits to proton translocation. In terms of biological role, component of the F(0) channel, it forms part of the peripheral stalk, linking F(1) to F(0). This Corynebacterium jeikeium (strain K411) protein is ATP synthase subunit b.